The following is a 485-amino-acid chain: Glutamyl-tRNA(Gln) amidotransferase subunit A (485 aa).

Catalysis depends on charge relay system residues Lys-79 and Ser-154. The Acyl-ester intermediate role is filled by Ser-178.

The protein belongs to the amidase family. GatA subfamily. Heterotrimer of A, B and C subunits.

It carries out the reaction L-glutamyl-tRNA(Gln) + L-glutamine + ATP + H2O = L-glutaminyl-tRNA(Gln) + L-glutamate + ADP + phosphate + H(+). Functionally, allows the formation of correctly charged Gln-tRNA(Gln) through the transamidation of misacylated Glu-tRNA(Gln) in organisms which lack glutaminyl-tRNA synthetase. The reaction takes place in the presence of glutamine and ATP through an activated gamma-phospho-Glu-tRNA(Gln). The chain is Glutamyl-tRNA(Gln) amidotransferase subunit A from Clostridium novyi (strain NT).